The primary structure comprises 20 residues: Small ribosomal subunit protein bS20 (20 aa).

Residues 1–20 are disordered; that stretch reads ANNPGARKAIRKIEARTEVN. Residues 11-20 are compositionally biased toward basic and acidic residues; the sequence is RKIEARTEVN.

Belongs to the bacterial ribosomal protein bS20 family.

Binds directly to 16S ribosomal RNA. The chain is Small ribosomal subunit protein bS20 (rpsT) from Brevundimonas vesicularis (Pseudomonas vesicularis).